Here is a 578-residue protein sequence, read N- to C-terminus: L-ascorbate oxidase (578 aa).

A signal peptide spans 1–28; sequence MASLGFLFFFLLPLILLELSSSRSVMAA. 2 consecutive Plastocyanin-like domains span residues 30 to 149 and 161 to 328; these read TRHF…LIVE and DGEF…NYLP. The Cu cation site is built by histidine 87, histidine 89, histidine 131, and histidine 133. 2 cysteine pairs are disulfide-bonded: cysteine 108-cysteine 565 and cysteine 207-cysteine 221. Asparagine 206 carries an N-linked (GlcNAc...) asparagine glycan. N-linked (GlcNAc...) asparagine glycans are attached at residues asparagine 349, asparagine 394, asparagine 438, and asparagine 451. Positions 372–550 constitute a Plastocyanin-like 3 domain; the sequence is HRRIILLNTQ…HMGMGVIFAE (179 aa). 8 residues coordinate Cu cation: histidine 472, histidine 475, histidine 477, histidine 533, cysteine 534, histidine 535, histidine 539, and methionine 544.

Belongs to the multicopper oxidase family. Dimer. It depends on Cu cation as a cofactor. Highly expressed in young and growing tissues.

The protein localises to the secreted. The catalysed reaction is 4 L-ascorbate + O2 = 4 monodehydro-L-ascorbate radical + 2 H2O. Its function is as follows. May be involved in a redox system involving ascorbic acid. This is L-ascorbate oxidase (AAO) from Nicotiana tabacum (Common tobacco).